Here is an 84-residue protein sequence, read N- to C-terminus: Acyl carrier protein MbtL (84 aa).

Residues 6–81 form the Carrier domain; it reads STVSTTLLSI…ELEAAIAAKY (76 aa). Ser-41 is modified (O-(pantetheine 4'-phosphoryl)serine).

4'-phosphopantetheine is transferred from CoA to a specific serine of apo-ACP, leading to the activated holo-ACP form.

The protein resides in the cytoplasm. It functions in the pathway siderophore biosynthesis; mycobactin biosynthesis. Acyl carrier protein involved in the formation of acyl-S-ACP intermediates within the mycobactin biosynthesis process. The aliphatic chains carried by ACP are subsequently transferred on to the mycobactin core by MbtK. The chain is Acyl carrier protein MbtL (mbtL) from Mycobacterium bovis (strain ATCC BAA-935 / AF2122/97).